Here is a 289-residue protein sequence, read N- to C-terminus: MKLLVKAPAKINLSLDVLGKRQDGYHEVKMIMTTIDLADRLELTELAEDRIEILSHNRYVPDDQRNLAYQAAKLLKEKFNVKKGVSITIEKTIPVAAGLAGGSSDAAATLRGLNKLWNLGLTIDELAELGAEIGSDVSFCVYGGTAIATGRGEKIEHIKTPPSCWVILAKPHIGVSTADVYGNLKLNRVTHPNVDKMVDVINSGDYKGICDTVGNVLEDVTFGMHPEVARIKSQMKRFGADAVLMSGSGPTVFGLVHHDSRMHRIYNGLKGFCEQVYAVRLLGERETLE.

The active site involves K10. Residue 94–104 (PVAAGLAGGSS) coordinates ATP. The active site involves D136.

Belongs to the GHMP kinase family. IspE subfamily.

The enzyme catalyses 4-CDP-2-C-methyl-D-erythritol + ATP = 4-CDP-2-C-methyl-D-erythritol 2-phosphate + ADP + H(+). It functions in the pathway isoprenoid biosynthesis; isopentenyl diphosphate biosynthesis via DXP pathway; isopentenyl diphosphate from 1-deoxy-D-xylulose 5-phosphate: step 3/6. In terms of biological role, catalyzes the phosphorylation of the position 2 hydroxy group of 4-diphosphocytidyl-2C-methyl-D-erythritol. The polypeptide is 4-diphosphocytidyl-2-C-methyl-D-erythritol kinase (Bacillus cereus (strain G9842)).